The primary structure comprises 219 residues: uncharacterized protein (219 aa).

The first 17 residues, 1-17, serve as a signal peptide directing secretion; it reads MFKKIIILFLGIFLLSS. Residue Cys-18 is the site of N-palmitoyl cysteine attachment. Cys-18 carries the S-diacylglycerol cysteine lipid modification. A disordered region spans residues 110 to 136; that stretch reads KAESNATQSNNDMTLSKANKKVRKDDS. Positions 112–126 are enriched in polar residues; it reads ESNATQSNNDMTLSK. The stretch at 137–165 forms a coiled coil; sequence YKEKKIEEELNQIKAMLRETKRDITKYTC.

The protein localises to the cell membrane. This is an uncharacterized protein from Rickettsia prowazekii (strain Madrid E).